Reading from the N-terminus, the 310-residue chain is D-alanine--D-alanine ligase (310 aa).

The ATP-grasp domain maps to 107–302 (KQAFQAARLT…FEDLVERILA (196 aa)). 135–188 (EFSLPVVVKPSQEGSSVGVSIVKKESEFAAAMKEAFRYDREILVEQFIKGSEVQ) serves as a coordination point for ATP. Residues Asp-256, Glu-269, and Asn-271 each coordinate Mg(2+).

Belongs to the D-alanine--D-alanine ligase family. The cofactor is Mg(2+). It depends on Mn(2+) as a cofactor.

The protein localises to the cytoplasm. It catalyses the reaction 2 D-alanine + ATP = D-alanyl-D-alanine + ADP + phosphate + H(+). The protein operates within cell wall biogenesis; peptidoglycan biosynthesis. Cell wall formation. In Geotalea uraniireducens (strain Rf4) (Geobacter uraniireducens), this protein is D-alanine--D-alanine ligase.